A 255-amino-acid chain; its full sequence is Reticulon-like protein B3 (255 aa).

The segment covering 1–25 (MAEEHKHEESIMEKISEKIHGHDDS) has biased composition (basic and acidic residues). Residues 1–38 (MAEEHKHEESIMEKISEKIHGHDDSSSSSSDSDDDKNS) form a disordered region. Position 2 is an N-acetylalanine (Ala-2). The Reticulon domain maps to 64–255 (PADIFLWRNK…GAFAFIKKKD (192 aa)). The next 3 membrane-spanning stretches (helical) occupy residues 75–95 (VSGG…LLEY), 97–117 (LLTL…LWSS), and 186–206 (CNFL…PVLY).

The protein localises to the endoplasmic reticulum membrane. It is found in the vacuole membrane. This Arabidopsis thaliana (Mouse-ear cress) protein is Reticulon-like protein B3 (RTNLB3).